The chain runs to 39 residues: Large ribosomal subunit protein bL36 (39 aa).

It belongs to the bacterial ribosomal protein bL36 family.

This is Large ribosomal subunit protein bL36 from Lactiplantibacillus plantarum (strain ATCC BAA-793 / NCIMB 8826 / WCFS1) (Lactobacillus plantarum).